We begin with the raw amino-acid sequence, 474 residues long: MATMYSAAVEVISKETIKPTTPTPSQLKNFNLSLLDQCFPLYYYVPIILFYPATAANSTGSSNHHDDLDLLKSSLSKTLVHFYPMAGRMIDNILVDCHDQGINFYKVKIRGKMCEFMSQPDVPLSQLLPSEVVSASVPKEALVIVQVNMFDCGGTAICSSVSHKIADAATMSTFIRSWASTTKTSRSGGSTAAVTDQKLIPSFDSASLFPPSERLTSPSGMSEIPFSSTPEDTEDDKTVSKRFVFDFAKITSVREKLQVLMHDNYKSRRQTRVEVVTSLIWKSVMKSTPAGFLPVVHHAVNLRKKMDPPLQDVSFGNLSVTVSAFLPATTTTTTNAVNKTINSTSSESQVVLHELHDFIAQMRSEIDKVKGDKGSLEKVIQNFASGHDASIKKINDVEVINFWISSWCRMGLYEIDFGWGKPIWVTVDPNIKPNKNCFFMNDTKCGEGIEVWASFLEDDMAKFELHLSEILELI.

Histidine 163 serves as the catalytic Proton acceptor. Positions 213 to 234 (ERLTSPSGMSEIPFSSTPEDTE) are disordered. The segment covering 214–230 (RLTSPSGMSEIPFSSTP) has biased composition (polar residues). Aspartate 416 acts as the Proton acceptor in catalysis.

This sequence belongs to the plant acyltransferase family. Expressed in root, stem, leaf and capsule of the mature plant. Restricted to sieve elements of the phloem adjacent or proximal to laticifers.

It carries out the reaction (7S)-salutaridinol + acetyl-CoA = (7S)-O-acetylsalutaridinol + CoA. It functions in the pathway alkaloid biosynthesis; morphine biosynthesis. Its function is as follows. Acetyltransferase involved in biosynthesis of morphinan-type benzylisoquinoline and opiate alkaloids natural products. Catalyzes the conversion of the phenanthrene alkaloid salutaridinol to salutaridinol-7-O-acetate, the immediate precursor of thebaine along the morphine biosynthetic pathway. Conversion of 7-O-acetylsalutaridinol into thebaine is spontaneous. This is Salutaridinol 7-O-acetyltransferase from Papaver somniferum (Opium poppy).